The primary structure comprises 423 residues: Protein MANNAN SYNTHESIS-RELATED 2 (423 aa).

Over 1–6 (MGVDLR) the chain is Cytoplasmic. The chain crosses the membrane as a helical; Signal-anchor for type II membrane protein span at residues 7–26 (QVVAGILTITMFVMLGQMLH). Topologically, residues 27-423 (RDYFDAVQEK…KNHLAYSCFC (397 aa)) are lumenal. 264–266 (DLR) lines the substrate pocket.

Belongs to the glycosyltransferase GT106 family. As to expression, widely expressed.

Its subcellular location is the golgi apparatus membrane. It participates in glycan biosynthesis. Its function is as follows. Glycosyltransferase involved in mannan biosynthesis. The polypeptide is Protein MANNAN SYNTHESIS-RELATED 2 (Arabidopsis thaliana (Mouse-ear cress)).